The following is a 163-amino-acid chain: Glycine cleavage system H-like protein gcvH5, mitochondrial (163 aa).

The N-terminal 23 residues, 1–23, are a transit peptide targeting the mitochondrion; sequence MFLFKTTNNLRKSLSNKFFCTRY. Positions 50–136 constitute a Lipoyl-binding domain; sequence IGTLGLTENG…MSKGWLCKIK (87 aa).

It belongs to the GcvH family.

Its subcellular location is the mitochondrion. The chain is Glycine cleavage system H-like protein gcvH5, mitochondrial (gcvH5) from Dictyostelium discoideum (Social amoeba).